The following is a 374-amino-acid chain: Queuine tRNA-ribosyltransferase (374 aa).

Asp-90 serves as the catalytic Proton acceptor. Substrate-binding positions include 90–94 (DSGGF), Asp-144, Gln-193, and Gly-220. Residues 251–257 (GVGTPED) form an RNA binding region. Asp-270 functions as the Nucleophile in the catalytic mechanism. The RNA binding; important for wobble base 34 recognition stretch occupies residues 275–279 (TRNAR). Residues Cys-308, Cys-310, Cys-313, and His-339 each coordinate Zn(2+).

The protein belongs to the queuine tRNA-ribosyltransferase family. As to quaternary structure, homodimer. Within each dimer, one monomer is responsible for RNA recognition and catalysis, while the other monomer binds to the replacement base PreQ1. The cofactor is Zn(2+).

It carries out the reaction 7-aminomethyl-7-carbaguanine + guanosine(34) in tRNA = 7-aminomethyl-7-carbaguanosine(34) in tRNA + guanine. Its pathway is tRNA modification; tRNA-queuosine biosynthesis. Catalyzes the base-exchange of a guanine (G) residue with the queuine precursor 7-aminomethyl-7-deazaguanine (PreQ1) at position 34 (anticodon wobble position) in tRNAs with GU(N) anticodons (tRNA-Asp, -Asn, -His and -Tyr). Catalysis occurs through a double-displacement mechanism. The nucleophile active site attacks the C1' of nucleotide 34 to detach the guanine base from the RNA, forming a covalent enzyme-RNA intermediate. The proton acceptor active site deprotonates the incoming PreQ1, allowing a nucleophilic attack on the C1' of the ribose to form the product. After dissociation, two additional enzymatic reactions on the tRNA convert PreQ1 to queuine (Q), resulting in the hypermodified nucleoside queuosine (7-(((4,5-cis-dihydroxy-2-cyclopenten-1-yl)amino)methyl)-7-deazaguanosine). This is Queuine tRNA-ribosyltransferase from Campylobacter fetus subsp. fetus (strain 82-40).